Here is a 244-residue protein sequence, read N- to C-terminus: MASLLGAICGWGARPEEQYEMIRAAVPPSEAEPRLQEALAVVNALLPAPITLDDALGSLDDTRRLVKARALARTYHACMVNLERLARHHPGFEAPTIDGAVAAHQDKMRRLADTCMATILQMYMSVGAADKSADVLVSQAIRSMAESDVVMEDVAIAERALGLSAFGVAGGTRSGGIGVTEAPSLGHPHTPPPEVTLAPAARNGDALPDPKPESCPRVSVPRPTASPTAPRPGPSRAAPCVLGQ.

Cys9 carries the S-palmitoyl cysteine; by host lipid modification. A disordered region spans residues 178-244 (GVTEAPSLGH…SRAAPCVLGQ (67 aa)). Residues 221-244 (PRPTASPTAPRPGPSRAAPCVLGQ) show a composition bias toward low complexity.

The protein belongs to the herpesviridae UL51 family. In terms of assembly, oligomerizes. Interacts with UL7; this interaction mediates UL7 incorporation to virions. Interacts with UL14. Post-translationally, phosphorylated. Palmitoylation is necessary for Golgi localization.

Its subcellular location is the virion tegument. The protein localises to the host cytoplasm. It localises to the host Golgi apparatus. Plays several roles during the time course of infection, including egress of virus particles from the perinuclear space and secondary envelopment of cytoplasmic capsids that bud into specific trans-Golgi network (TGN)-derived membranes. Plays also an essential role in the maintenance of host cytoplasmic viral assembly center (cVAC) morphology in primary host neuronal cells. The sequence is that of Tegument protein UL51 from Homo sapiens (Human).